The following is a 653-amino-acid chain: Fructose-1,6-bisphosphatase class 3 (653 aa).

It belongs to the FBPase class 3 family. It depends on Mn(2+) as a cofactor.

The catalysed reaction is beta-D-fructose 1,6-bisphosphate + H2O = beta-D-fructose 6-phosphate + phosphate. Its pathway is carbohydrate biosynthesis; gluconeogenesis. This is Fructose-1,6-bisphosphatase class 3 from Listeria monocytogenes serovar 1/2a (strain ATCC BAA-679 / EGD-e).